The primary structure comprises 624 residues: Chromosomal replication initiator protein DnaA (624 aa).

Residues 1-99 (MADVPADLAA…SAGEPPSPPA (99 aa)) form a domain I, interacts with DnaA modulators region. Positions 88–284 (DDSAGEPPSP…APGPGEPHAR (197 aa)) are disordered. The interval 100-283 (PPMHQSHQSQ…PAPGPGEPHA (184 aa)) is domain II. The span at 102–112 (MHQSHQSQQGH) shows a compositional bias: low complexity. 2 stretches are compositionally biased toward basic and acidic residues: residues 118 to 141 (QRDD…DGMP) and 176 to 206 (GYQD…REQA). Residues 250–264 (PRQGGHGPGRTGGSV) are compositionally biased toward gly residues. The segment at 284–500 (RLNPKYLFDT…GALIRVTAFA (217 aa)) is domain III, AAA+ region. ATP contacts are provided by G328, G330, K331, and T332. The domain IV, binds dsDNA stretch occupies residues 501-624 (SLNRQPVDLG…TELTNRIKNG (124 aa)).

The protein belongs to the DnaA family. Oligomerizes as a right-handed, spiral filament on DNA at oriC.

The protein localises to the cytoplasm. Plays an essential role in the initiation and regulation of chromosomal replication. ATP-DnaA binds to the origin of replication (oriC) to initiate formation of the DNA replication initiation complex once per cell cycle. Binds the DnaA box (a 9 base pair repeat at the origin) and separates the double-stranded (ds)DNA. Forms a right-handed helical filament on oriC DNA; dsDNA binds to the exterior of the filament while single-stranded (ss)DNA is stabiized in the filament's interior. The ATP-DnaA-oriC complex binds and stabilizes one strand of the AT-rich DNA unwinding element (DUE), permitting loading of DNA polymerase. After initiation quickly degrades to an ADP-DnaA complex that is not apt for DNA replication. Binds acidic phospholipids. In terms of biological role, the DnaA box consensus is 5'-(T/C)(T/C)(G/AC)TCCACA-3'. This chain is Chromosomal replication initiator protein DnaA, found in Streptomyces anulatus (Streptomyces chrysomallus).